Consider the following 345-residue polypeptide: MSSYQKELEKYRDIDEDEILRTLSPEELEQLDCELQEMDPENMLLPAGLRQRDQTKKSPTGPLDRDALLQYLEQQALEVKERDDLVPYTGEKKGKPFIQPKREIPAQEQITLEPELEEALSHATDAEMCDIAAILGMYTLMSNKQYYDAICSGEICNTEGISSVVQPDKYKPVPDEPPNPTNIEEMLKRVRSNDKELEEVNLNNIQDIPIPVLSDLCEAMKTNTYVRSFSLVATKSGDPIANAVADMLRENRSLQSLNIESNFISSTGLMAVLKAVRENATLTELRVDNQRQWPGDAVEMEMATVLEQCPSIVRFGYHFTQQGPRARAAHAMTRNNELRRQQKKR.

Disordered regions lie at residues 40–64 and 326–345; these read PENM…GPLD and ARAA…QKKR. Over residues 336 to 345 the composition is skewed to basic and acidic residues; that stretch reads NELRRQQKKR.

This sequence belongs to the tropomodulin family. Binds to the N-terminus of tropomyosin and to actin.

It is found in the cytoplasm. It localises to the cytoskeleton. In terms of biological role, blocks the elongation and depolymerization of the actin filaments at the pointed end. The Tmod/TM complex contributes to the formation of the short actin protofilament, which in turn defines the geometry of the membrane skeleton. This chain is Tropomodulin-4 (Tmod4), found in Mus musculus (Mouse).